The following is a 554-amino-acid chain: Nonribosomal peptide synthetase ALT12 (554 aa).

A Carrier domain is found at 1–76 (MASLEHMKRI…TLWEAMNDTQ (76 aa)). Serine 35 carries the post-translational modification O-(pantetheine 4'-phosphoryl)serine. The tract at residues 124-434 (VQDNVLCVAP…QRIQNEITST (311 aa)) is condensation.

It belongs to the NRP synthetase family.

It participates in mycotoxin biosynthesis. Its function is as follows. Nonribosomal peptide synthetase; part of the gene cluster that mediates the biosynthesis of the host-selective toxins (HSTs) AAL-toxins, sphinganine-analog mycotoxins responsible for Alternaria stem canker on tomato by the tomato pathotype. The biosynthesis starts with the polyketide synthase ALT1-catalyzed C-16 carbon chain assembly from one starter acetyl-CoA unit with malonyl-CoA extender units. ALT1 also selectively transfers methyl groups at the first and the third cycle of chain elongation for AAL toxin. The C-16 polyketide chain is released from the enzyme by a nucleophilic attack of a carbanion, which is derived from R-carbon of glycin by decarboxylation, on the carbonyl carbon of polyketide acyl chain. This step is probably catalyzed by a pyridoxal 5'-phosphate-dependent aminoacyl transferase ALT4. The respective functions of the other enzymes encoded by the cluster have still to be elucidated. The sphingosine N-acyltransferase-like protein ALT7 seems not to act as a resistance/self-tolerance factor against the toxin in the toxin biosynthetic gene cluster, contrary to what is expected. This Alternaria alternata (Alternaria rot fungus) protein is Nonribosomal peptide synthetase ALT12.